The following is a 190-amino-acid chain: Glutathione peroxidase 2 (190 aa).

Residue Sec40 is part of the active site. A non-standard amino acid (selenocysteine) is located at residue Sec40.

This sequence belongs to the glutathione peroxidase family. Homotetramer. Mucosal epithelium of the gastrointestinal tract.

It localises to the cytoplasm. Its subcellular location is the cytosol. It carries out the reaction 2 glutathione + H2O2 = glutathione disulfide + 2 H2O. The catalysed reaction is a hydroperoxy polyunsaturated fatty acid + 2 glutathione = a hydroxy polyunsaturated fatty acid + glutathione disulfide + H2O. The enzyme catalyses tert-butyl hydroperoxide + 2 glutathione = tert-butanol + glutathione disulfide + H2O. It catalyses the reaction cumene hydroperoxide + 2 glutathione = 2-phenylpropan-2-ol + glutathione disulfide + H2O. It carries out the reaction (13S)-hydroperoxy-(9Z,11E)-octadecadienoate + 2 glutathione = (13S)-hydroxy-(9Z,11E)-octadecadienoate + glutathione disulfide + H2O. The catalysed reaction is (5S)-hydroperoxy-(6E,8Z,11Z,14Z)-eicosatetraenoate + 2 glutathione = (5S)-hydroxy-(6E,8Z,11Z,14Z)-eicosatetraenoate + glutathione disulfide + H2O. The enzyme catalyses (12R)-hydroperoxy-(5Z,8Z,10E,14Z)-eicosatetraenoate + 2 glutathione = (12R)-hydroxy-(5Z,8Z,10E,14Z)-eicosatetraenoate + glutathione disulfide + H2O. It catalyses the reaction (15S)-hydroperoxy-(5Z,8Z,11Z,13E)-eicosatetraenoate + 2 glutathione = (15S)-hydroxy-(5Z,8Z,11Z,13E)-eicosatetraenoate + glutathione disulfide + H2O. Catalyzes the reduction of hydroperoxides in a glutathione-dependent manner thus regulating cellular redox homeostasis. Can reduce small soluble hydroperoxide such as H2O2. Can reduce cumene hydroperoxide and tert-butyl hydroperoxide, as well as several fatty acid-derived hydroperoxides. Cannot reduce phosphatidycholine hydroperoxide. The polypeptide is Glutathione peroxidase 2 (Gpx2) (Rattus norvegicus (Rat)).